The primary structure comprises 710 residues: Polyribonucleotide nucleotidyltransferase (710 aa).

Asp-485 and Asp-491 together coordinate Mg(2+). The KH domain occupies 552–611 (PKILTLTINPDKIRDVIGPSGKVINKIIEETGVKIDIEQDGTVYISSLDTAMNQKAKQII). In terms of domain architecture, S1 motif spans 621-689 (GETYHGKVKR…NQGRVNLSRK (69 aa)).

Belongs to the polyribonucleotide nucleotidyltransferase family. The cofactor is Mg(2+).

The protein resides in the cytoplasm. It carries out the reaction RNA(n+1) + phosphate = RNA(n) + a ribonucleoside 5'-diphosphate. In terms of biological role, involved in mRNA degradation. Catalyzes the phosphorolysis of single-stranded polyribonucleotides processively in the 3'- to 5'-direction. This is Polyribonucleotide nucleotidyltransferase from Shouchella clausii (strain KSM-K16) (Alkalihalobacillus clausii).